Reading from the N-terminus, the 244-residue chain is Glutathione S-transferase theta-2B (244 aa).

The region spanning 2 to 82 is the GST N-terminal domain; the sequence is GLELFLDLVS…YLSCKYQTPD (81 aa). Residues 40–41, 53–54, 66–67, and 104–107 contribute to the glutathione site; these read HK, KL, ES, and DCIR. The region spanning 88-224 is the GST C-terminal domain; it reads DLQARARVHE…SILEQAAKKT (137 aa).

It belongs to the GST superfamily. Theta family. As to quaternary structure, homodimer. Expressed at low levels in liver. In lung, expressed at low levels in ciliated bronchiolar cells, alveolar macrophages and alveolar type II cells.

The protein resides in the cytoplasm. It is found in the cytosol. The catalysed reaction is RX + glutathione = an S-substituted glutathione + a halide anion + H(+). In terms of biological role, conjugation of reduced glutathione to a wide number of exogenous and endogenous hydrophobic electrophiles. Has a sulfatase activity. The sequence is that of Glutathione S-transferase theta-2B (GSTT2B) from Homo sapiens (Human).